Reading from the N-terminus, the 805-residue chain is Arginine/serine-rich protein PNISR (805 aa).

The span at 75 to 88 shows a compositional bias: polar residues; sequence NNHGNFQGDSNFNR. Disordered regions lie at residues 75-331 and 382-805; these read NNHG…EEKE and LTGL…SRSR. 2 stretches are compositionally biased toward pro residues: residues 100-115 and 183-194; these read PPHPPPEQPWMPPAPG and YWQPGPPGPPAP. Over residues 197 to 210 the composition is skewed to basic and acidic residues; sequence NRRERPPSFRDRQR. Ser-204 and Ser-211 each carry phosphoserine. A Glycyl lysine isopeptide (Lys-Gly) (interchain with G-Cter in SUMO2) cross-link involves residue Lys-218. Positions 237-276 form a coiled coil; the sequence is REGLEKMEREKQKKLEKERMEQQRSQLSKKEKKATEDAEG. The span at 238–258 shows a compositional bias: basic and acidic residues; sequence EGLEKMEREKQKKLEKERMEQ. Residues Ser-290, Ser-304, Ser-313, and Ser-321 each carry the phosphoserine modification. Residues 290-299 are compositionally biased toward acidic residues; it reads SDEEDEDAEN. Gly residues predominate over residues 384 to 393; that stretch reads GLGGLGGYGS. The span at 421 to 463 shows a compositional bias: basic and acidic residues; sequence QKQEAFWRKEKEQQLLQDKQIEEEKQQTERVTKEMNEFIHREQ. A coiled-coil region spans residues 427–461; sequence WRKEKEQQLLQDKQIEEEKQQTERVTKEMNEFIHR. Phosphoserine occurs at positions 465 and 467. Composition is skewed to basic and acidic residues over residues 473–486 and 494–508; these read EADRDAVNDKKRTP and EPKREHKGKEKERGS. Thr-485 bears the Phosphothreonine mark. Lys-496 is covalently cross-linked (Glycyl lysine isopeptide (Lys-Gly) (interchain with G-Cter in SUMO2)). Low complexity predominate over residues 509 to 550; that stretch reads RSGSSSSGSSSSGSRTSSSSSSVSSSSYSSSSGSSCTSSRSS. Composition is skewed to basic residues over residues 551-560, 567-579, 587-598, and 607-639; these read SPKRRKRPSR, KARRSRSRSYSRR, TRGKLRDRRRSN, and RRNRSPSRDRRRSRSRSRDRRTNRSSRSRSRDR. Residues 659–721 show a composition bias toward basic and acidic residues; it reads EAKEQDRKKE…KRKRESERTF (63 aa). A Glycyl lysine isopeptide (Lys-Gly) (interchain with G-Cter in SUMO2) cross-link involves residue Lys-703. The residue at position 726 (Ser-726) is a Phosphoserine. The span at 732–753 shows a compositional bias: basic and acidic residues; that stretch reads IRHDSRQDSKKNATKDSKRHSG. Over residues 754–767 the composition is skewed to low complexity; it reads SDSSGRSSSESPGS. 2 stretches are compositionally biased toward basic residues: residues 771–781 and 789–805; these read KKAKKPKHSRS and RSGKKASRKHKSKSRSR.

This sequence belongs to the splicing factor SR family. As to quaternary structure, interacts with PNN.

It localises to the nucleus speckle. In Mus musculus (Mouse), this protein is Arginine/serine-rich protein PNISR (Pnisr).